Consider the following 1262-residue polypeptide: Isoleucine--tRNA ligase, cytoplasmic (1262 aa).

The residue at position 1 (M1) is an N-acetylmethionine. A 'HIGH' region motif is present at residues 48 to 58 (PFATGLPHYGH). A 'KMSKS' region motif is present at residues 600–604 (KMSKR). ATP is bound at residue K603. Residues S1047 and S1049 each carry the phosphoserine modification. Residue T1058 is modified to Phosphothreonine.

It belongs to the class-I aminoacyl-tRNA synthetase family. In terms of assembly, part of a multisubunit complex that groups tRNA ligases for Arg (RARS1), Asp (DARS1), Gln (QARS1), Ile (IARS1), Leu (LARS1), Lys (KARS1), Met (MARS1) the bifunctional ligase for Glu and Pro (EPRS1) and the auxiliary subunits AIMP1/p43, AIMP2/p38 and EEF1E1/p18. As to expression, expressed in liver and muscle (at protein level).

Its subcellular location is the cytoplasm. The protein resides in the cytosol. It catalyses the reaction tRNA(Ile) + L-isoleucine + ATP = L-isoleucyl-tRNA(Ile) + AMP + diphosphate. Functionally, catalyzes the specific attachment of an amino acid to its cognate tRNA in a 2 step reaction: the amino acid (AA) is first activated by ATP to form AA-AMP and then transferred to the acceptor end of the tRNA. The protein is Isoleucine--tRNA ligase, cytoplasmic of Homo sapiens (Human).